The following is a 350-amino-acid chain: C5a anaphylatoxin chemotactic receptor 1 (350 aa).

Residues 1 to 37 (MDSFNYTTPDYGHYDDKDTLDPNTPVDKTSNTLRVPD) are Extracellular-facing. Residues 10–18 (DYGHYDDKD) form a required for CHIPS binding region. A sulfotyrosine mark is found at Tyr-11 and Tyr-14. Positions 21–30 (DPNTPVDKTS) are involved in C5a binding. Residues 38-64 (ILALVIFAVVFLVGVLGNALVVWVTAF) form a helical membrane-spanning segment. The Cytoplasmic segment spans residues 65 to 69 (EVKRT). The chain crosses the membrane as a helical span at residues 70–93 (INAIWFLNLAVADFLSCLALPILF). At 94–110 (TSIVQHHHWPFGGAACR) the chain is on the extracellular side. An intrachain disulfide couples Cys-109 to Cys-188. A helical transmembrane segment spans residues 111–132 (ILPSLILLNMYASILLLATISA). Topologically, residues 133-153 (DRFLLVFKPIWCQNFRGAGLA) are cytoplasmic. Residues 154–174 (WIACAVAWGLALLLTIPSFLY) traverse the membrane as a helical segment. Residues 175-200 (RVVREEYFPPKVLCGVDYSHDKQRER) lie on the Extracellular side of the membrane. A helical membrane pass occupies residues 201-226 (AVAVVRLVLGFLWPLLTLTICYTFIL). Over 227-242 (LRTWSRRATRSTKTLK) the chain is Cytoplasmic. The helical transmembrane segment at 243–265 (VVVAVVASFFIFWLPYQVTGIMM) threads the bilayer. At 266 to 282 (SFLEPSSPTFLLLKKLD) the chain is on the extracellular side. A helical membrane pass occupies residues 283–303 (SLCVSFAYINCCINPIIYVVA). Topologically, residues 304 to 350 (GQGFQGRLRKSLPSLLRNVLTEESVVRESKSFTRSTVDTMAEKTQAV) are cytoplasmic. 6 positions are modified to phosphoserine: Ser-314, Ser-317, Ser-327, Ser-332, Ser-334, and Ser-338.

This sequence belongs to the G-protein coupled receptor 1 family. Homodimer. May also form higher-order oligomers. Interacts (when phosphorylated) with ARRB1 and ARRB2; the interaction is associated with internalization of C5aR. Interacts (via N-terminal domain) with S.aureus chemotaxis inhibitory protein (CHIPS); the interaction blocks the receptor and may thus inhibit the immune response. In terms of processing, sulfation plays a critical role in the association of C5aR with C5a, but no significant role in the ability of the receptor to transduce a signal and mobilize calcium in response to a small peptide agonist. Sulfation at Tyr-14 is important for CHIPS binding. Phosphorylated on serine residues in response to C5a binding, resulting in internalization of the receptor and short-term desensitization to C5a.

The protein localises to the cell membrane. It is found in the cytoplasmic vesicle. Receptor for the chemotactic and inflammatory peptide anaphylatoxin C5a. The ligand interacts with at least two sites on the receptor: a high-affinity site on the extracellular N-terminus, and a second site in the transmembrane region which activates downstream signaling events. Receptor activation stimulates chemotaxis, granule enzyme release, intracellular calcium release and superoxide anion production. In Gorilla gorilla gorilla (Western lowland gorilla), this protein is C5a anaphylatoxin chemotactic receptor 1 (C5AR1).